Consider the following 261-residue polypeptide: MTHQTHAYHMVNPSPWPLTGALSALLMTSGLIMWFHFNSTALLTLGLTTNMLTMYQWWRDVIRESTFQGHHTPAVQKGLRYGMILFIISEVLFFTGFFWAFYHSSLAPTPELGGCWPPTGIHPLNPLEVPLLNTSVLLASGVSITWAHHSLMEGNRYHMLQALFITIALGVYFTLLQASEYYEAPFTISDGVYGSTFFVATGFHGLHVIIGSTFLIVCFFRQLKFHFTSSHHFGFEAAAWYWHFVDVVWLFLYMSIYWWGS.

Over 1-15 (MTHQTHAYHMVNPSP) the chain is Mitochondrial matrix. Residues 16–34 (WPLTGALSALLMTSGLIMW) form a helical membrane-spanning segment. The Mitochondrial intermembrane segment spans residues 35–40 (FHFNST). A helical transmembrane segment spans residues 41 to 66 (ALLTLGLTTNMLTMYQWWRDVIREST). The Mitochondrial matrix segment spans residues 67–72 (FQGHHT). A helical transmembrane segment spans residues 73–105 (PAVQKGLRYGMILFIISEVLFFTGFFWAFYHSS). Over 106 to 128 (LAPTPELGGCWPPTGIHPLNPLE) the chain is Mitochondrial intermembrane. The helical transmembrane segment at 129–152 (VPLLNTSVLLASGVSITWAHHSLM) threads the bilayer. Topologically, residues 153–155 (EGN) are mitochondrial matrix. Residues 156–183 (RYHMLQALFITIALGVYFTLLQASEYYE) traverse the membrane as a helical segment. Residues 184 to 190 (APFTISD) lie on the Mitochondrial intermembrane side of the membrane. A helical transmembrane segment spans residues 191 to 223 (GVYGSTFFVATGFHGLHVIIGSTFLIVCFFRQL). The Mitochondrial matrix segment spans residues 224-232 (KFHFTSSHH). Residues 233 to 256 (FGFEAAAWYWHFVDVVWLFLYMSI) form a helical membrane-spanning segment. At 257 to 261 (YWWGS) the chain is on the mitochondrial intermembrane side.

This sequence belongs to the cytochrome c oxidase subunit 3 family. Component of the cytochrome c oxidase (complex IV, CIV), a multisubunit enzyme composed of 14 subunits. The complex is composed of a catalytic core of 3 subunits MT-CO1, MT-CO2 and MT-CO3, encoded in the mitochondrial DNA, and 11 supernumerary subunits COX4I, COX5A, COX5B, COX6A, COX6B, COX6C, COX7A, COX7B, COX7C, COX8 and NDUFA4, which are encoded in the nuclear genome. The complex exists as a monomer or a dimer and forms supercomplexes (SCs) in the inner mitochondrial membrane with NADH-ubiquinone oxidoreductase (complex I, CI) and ubiquinol-cytochrome c oxidoreductase (cytochrome b-c1 complex, complex III, CIII), resulting in different assemblies (supercomplex SCI(1)III(2)IV(1) and megacomplex MCI(2)III(2)IV(2)).

Its subcellular location is the mitochondrion inner membrane. The catalysed reaction is 4 Fe(II)-[cytochrome c] + O2 + 8 H(+)(in) = 4 Fe(III)-[cytochrome c] + 2 H2O + 4 H(+)(out). Functionally, component of the cytochrome c oxidase, the last enzyme in the mitochondrial electron transport chain which drives oxidative phosphorylation. The respiratory chain contains 3 multisubunit complexes succinate dehydrogenase (complex II, CII), ubiquinol-cytochrome c oxidoreductase (cytochrome b-c1 complex, complex III, CIII) and cytochrome c oxidase (complex IV, CIV), that cooperate to transfer electrons derived from NADH and succinate to molecular oxygen, creating an electrochemical gradient over the inner membrane that drives transmembrane transport and the ATP synthase. Cytochrome c oxidase is the component of the respiratory chain that catalyzes the reduction of oxygen to water. Electrons originating from reduced cytochrome c in the intermembrane space (IMS) are transferred via the dinuclear copper A center (CU(A)) of subunit 2 and heme A of subunit 1 to the active site in subunit 1, a binuclear center (BNC) formed by heme A3 and copper B (CU(B)). The BNC reduces molecular oxygen to 2 water molecules using 4 electrons from cytochrome c in the IMS and 4 protons from the mitochondrial matrix. The sequence is that of Cytochrome c oxidase subunit 3 (MT-CO3) from Ovis aries (Sheep).